A 101-amino-acid chain; its full sequence is uncharacterized protein (101 aa).

Residues 1-24 (MILMFRMNKGMSFITLLFSLALFS) form the signal peptide.

This is an uncharacterized protein from Haemophilus influenzae (strain ATCC 51907 / DSM 11121 / KW20 / Rd).